Here is a 337-residue protein sequence, read N- to C-terminus: MTLLAKSLEELTDWVKDQGQPAYRGKQLHQWLYEKGVHSLADISVFPQEWRSKMADYPIGRSLIHYRSVAPDRTRKYLLKLADGLIIEAVGIPSEKRLTVCVSSQVGCPMACDFCATGKGGFTRNLKAHEIVDQVLTVQEDFQQRVSHVVFMGMGEPLLNIPEVVTAIHCLNKDVGIGQRCLTISTVGLPHKIKQLAEHNLQITFAVSLHASNQQVRAKLIPSADHYLLSNLIQDCQEYVQITGRRVTFEYILLAGVNDLPEHARELAKLVKGFQSHVNLIPYNPIQEVDYQRPDEKRIKAFKTILEQEKVAVTVRYSRGLATDAACGQLRSSVMVQ.

The active-site Proton acceptor is the glutamate 88. Residues 94-324 form the Radical SAM core domain; that stretch reads SEKRLTVCVS…VRYSRGLATD (231 aa). The cysteines at positions 101 and 327 are disulfide-linked. 3 residues coordinate [4Fe-4S] cluster: cysteine 108, cysteine 112, and cysteine 115. Residues 155–156, serine 185, 208–210, and asparagine 284 each bind S-adenosyl-L-methionine; these read GE and SLH. Cysteine 327 acts as the S-methylcysteine intermediate in catalysis.

This sequence belongs to the radical SAM superfamily. RlmN family. Requires [4Fe-4S] cluster as cofactor.

It localises to the cytoplasm. It catalyses the reaction adenosine(2503) in 23S rRNA + 2 reduced [2Fe-2S]-[ferredoxin] + 2 S-adenosyl-L-methionine = 2-methyladenosine(2503) in 23S rRNA + 5'-deoxyadenosine + L-methionine + 2 oxidized [2Fe-2S]-[ferredoxin] + S-adenosyl-L-homocysteine. The catalysed reaction is adenosine(37) in tRNA + 2 reduced [2Fe-2S]-[ferredoxin] + 2 S-adenosyl-L-methionine = 2-methyladenosine(37) in tRNA + 5'-deoxyadenosine + L-methionine + 2 oxidized [2Fe-2S]-[ferredoxin] + S-adenosyl-L-homocysteine. Specifically methylates position 2 of adenine 2503 in 23S rRNA and position 2 of adenine 37 in tRNAs. The protein is Probable dual-specificity RNA methyltransferase RlmN of Microcystis aeruginosa (strain NIES-843 / IAM M-2473).